A 493-amino-acid chain; its full sequence is Cysteine--tRNA ligase (493 aa).

Cys41 provides a ligand contact to Zn(2+). Residues Pro43–Asn53 carry the 'HIGH' region motif. Positions 231, 256, and 260 each coordinate Zn(2+). The short motif at Lys296–Ser300 is the 'KMSKS' region element. Lys299 contributes to the ATP binding site.

The protein belongs to the class-I aminoacyl-tRNA synthetase family. As to quaternary structure, monomer. Zn(2+) serves as cofactor.

It localises to the cytoplasm. The catalysed reaction is tRNA(Cys) + L-cysteine + ATP = L-cysteinyl-tRNA(Cys) + AMP + diphosphate. In Novosphingobium aromaticivorans (strain ATCC 700278 / DSM 12444 / CCUG 56034 / CIP 105152 / NBRC 16084 / F199), this protein is Cysteine--tRNA ligase.